A 687-amino-acid polypeptide reads, in one-letter code: Putative mitochondrial carnitine O-acetyltransferase (687 aa).

The active-site Proton acceptor is H346. A CoA-binding site is contributed by G446–D459. (R)-carnitine-binding residues include Y481 and T494. A Phosphoserine modification is found at S517.

This sequence belongs to the carnitine/choline acetyltransferase family.

It is found in the mitochondrion inner membrane. It carries out the reaction (R)-carnitine + acetyl-CoA = O-acetyl-(R)-carnitine + CoA. Functionally, involved in the transfer of acetyl-CoA into mitochondria. May also be involved in the metabolism of acetate and of ethanol. This Saccharomyces cerevisiae (strain ATCC 204508 / S288c) (Baker's yeast) protein is Putative mitochondrial carnitine O-acetyltransferase (YAT1).